Reading from the N-terminus, the 149-residue chain is Large ribosomal subunit protein bL9 (149 aa).

Belongs to the bacterial ribosomal protein bL9 family.

Binds to the 23S rRNA. The polypeptide is Large ribosomal subunit protein bL9 (rplI) (Geobacillus stearothermophilus (Bacillus stearothermophilus)).